The following is a 398-amino-acid chain: Ribosomal RNA large subunit methyltransferase F (398 aa).

Residues 1-12 (MTPSRKPARPGA) are compositionally biased toward basic residues. The disordered stretch occupies residues 1-85 (MTPSRKPARP…RNLHGQGYDF (85 aa)). Composition is skewed to low complexity over residues 20-40 (PSAK…AQPK) and 48-59 (QAKSQAKPQAKS).

Belongs to the methyltransferase superfamily. METTL16/RlmF family.

It localises to the cytoplasm. The catalysed reaction is adenosine(1618) in 23S rRNA + S-adenosyl-L-methionine = N(6)-methyladenosine(1618) in 23S rRNA + S-adenosyl-L-homocysteine + H(+). Functionally, specifically methylates the adenine in position 1618 of 23S rRNA. The chain is Ribosomal RNA large subunit methyltransferase F from Shewanella loihica (strain ATCC BAA-1088 / PV-4).